Reading from the N-terminus, the 224-residue chain is Protein-L-isoaspartate O-methyltransferase (224 aa).

The active site involves serine 63.

It belongs to the methyltransferase superfamily. L-isoaspartyl/D-aspartyl protein methyltransferase family.

It localises to the cytoplasm. The catalysed reaction is [protein]-L-isoaspartate + S-adenosyl-L-methionine = [protein]-L-isoaspartate alpha-methyl ester + S-adenosyl-L-homocysteine. Catalyzes the methyl esterification of L-isoaspartyl residues in peptides and proteins that result from spontaneous decomposition of normal L-aspartyl and L-asparaginyl residues. It plays a role in the repair and/or degradation of damaged proteins. The sequence is that of Protein-L-isoaspartate O-methyltransferase from Herpetosiphon aurantiacus (strain ATCC 23779 / DSM 785 / 114-95).